The primary structure comprises 544 residues: Membrane protein insertase YidC (544 aa).

A helical membrane pass occupies residues 4–24 (KALLALVLSAAVLLIYQIFIY). Residues 44-78 (NPAAPVSPQTPADEPSSGSAANPETAAALPVDGTE) are disordered. A run of 3 helical transmembrane segments spans residues 363–383 (NYGI…WPLG), 434–454 (LPMI…LYAI), and 508–528 (PVIF…YWLF).

The protein belongs to the OXA1/ALB3/YidC family. Type 1 subfamily. As to quaternary structure, interacts with the Sec translocase complex via SecD. Specifically interacts with transmembrane segments of nascent integral membrane proteins during membrane integration.

It localises to the cell inner membrane. Functionally, required for the insertion and/or proper folding and/or complex formation of integral membrane proteins into the membrane. Involved in integration of membrane proteins that insert both dependently and independently of the Sec translocase complex, as well as at least some lipoproteins. Aids folding of multispanning membrane proteins. The sequence is that of Membrane protein insertase YidC from Syntrophus aciditrophicus (strain SB).